The chain runs to 121 residues: Large ribosomal subunit protein bL20 (121 aa).

It belongs to the bacterial ribosomal protein bL20 family.

Binds directly to 23S ribosomal RNA and is necessary for the in vitro assembly process of the 50S ribosomal subunit. It is not involved in the protein synthesizing functions of that subunit. The chain is Large ribosomal subunit protein bL20 from Methylorubrum extorquens (strain PA1) (Methylobacterium extorquens).